The primary structure comprises 318 residues: Thymidylate synthase (318 aa).

DUMP is bound by residues R25 and 180-181 (RR). C200 acts as the Nucleophile in catalysis. Residues 220 to 223 (RSGD), N231, and 261 to 263 (HIY) contribute to the dUMP site. D223 contacts (6R)-5,10-methylene-5,6,7,8-tetrahydrofolate. A317 contacts (6R)-5,10-methylene-5,6,7,8-tetrahydrofolate.

This sequence belongs to the thymidylate synthase family. Bacterial-type ThyA subfamily. Homodimer.

Its subcellular location is the cytoplasm. The enzyme catalyses dUMP + (6R)-5,10-methylene-5,6,7,8-tetrahydrofolate = 7,8-dihydrofolate + dTMP. It functions in the pathway pyrimidine metabolism; dTTP biosynthesis. Catalyzes the reductive methylation of 2'-deoxyuridine-5'-monophosphate (dUMP) to 2'-deoxythymidine-5'-monophosphate (dTMP) while utilizing 5,10-methylenetetrahydrofolate (mTHF) as the methyl donor and reductant in the reaction, yielding dihydrofolate (DHF) as a by-product. This enzymatic reaction provides an intracellular de novo source of dTMP, an essential precursor for DNA biosynthesis. The polypeptide is Thymidylate synthase (Lactobacillus johnsonii (strain CNCM I-12250 / La1 / NCC 533)).